We begin with the raw amino-acid sequence, 367 residues long: Glutamate 5-kinase (367 aa).

Residue K9 coordinates ATP. S49, D136, and N148 together coordinate substrate. Residues 168–169 and 210–216 each bind ATP; these read TD and TGGMKSK. The PUA domain occupies 276–350; it reads SGQIEVDAGA…GMQSQDIQAR (75 aa).

This sequence belongs to the glutamate 5-kinase family.

Its subcellular location is the cytoplasm. It carries out the reaction L-glutamate + ATP = L-glutamyl 5-phosphate + ADP. Its pathway is amino-acid biosynthesis; L-proline biosynthesis; L-glutamate 5-semialdehyde from L-glutamate: step 1/2. Its function is as follows. Catalyzes the transfer of a phosphate group to glutamate to form L-glutamate 5-phosphate. The polypeptide is Glutamate 5-kinase (Bacillus mycoides (strain KBAB4) (Bacillus weihenstephanensis)).